A 479-amino-acid polypeptide reads, in one-letter code: Ankyrin repeat, SAM and basic leucine zipper domain-containing protein 1 (479 aa).

Phosphoserine is present on residues serine 22 and serine 24. 6 ANK repeats span residues 49 to 78 (EKNE…SVDS), 82 to 111 (YGWT…NASF), 114 to 148 (DKQT…DPNV), 152 to 181 (RLMT…EVNT), 185 to 214 (NGYT…NKML), and 218 to 247 (DGKT…PLEG). The region spanning 276–338 (SYTALGDLEI…KILDALKELQ (63 aa)) is the SAM domain.

As to quaternary structure, interacts with DDX4, PIWIL1, RANBP9 and TDRD1.

It is found in the cytoplasm. Plays a central role during spermatogenesis by repressing transposable elements and preventing their mobilization, which is essential for the germline integrity. Acts via the piRNA metabolic process, which mediates the repression of transposable elements during meiosis by forming complexes composed of piRNAs and Piwi proteins and governs the methylation and subsequent repression of transposons. Its association with pi-bodies suggests a participation in the primary piRNAs metabolic process. Required prior to the pachytene stage to facilitate the production of multiple types of piRNAs, including those associated with repeats involved in the regulation of retrotransposons. May act by mediating protein-protein interactions during germ cell maturation. The chain is Ankyrin repeat, SAM and basic leucine zipper domain-containing protein 1 (ASZ1) from Rhinolophus ferrumequinum (Greater horseshoe bat).